Here is an 818-residue protein sequence, read N- to C-terminus: Hillarin (818 aa).

Residues 9–76 (STCLRCSETV…SSHVPKSGPG (68 aa)) form the LIM zinc-binding domain. The interval 97 to 141 (FVNEQIRGTRSEVDGGPLGGSRQSTPNGYGSREISSPSQNDSDYK) is disordered. A compositionally biased stretch (polar residues) spans 117–137 (SRQSTPNGYGSREISSPSQND). Residues 216-272 (QDEWERELQRLTHKFEKELATSRRSRDEANILTMRHEQQKEDLEKNMTLRRSKKKES) adopt a coiled-coil conformation.

The protein belongs to the transglutaminase-like superfamily. As to quaternary structure, interacts with pnut. As to expression, localizes to the neuropil of the embryonic central nervous system (at protein level). Also detected in third instar larval brain (at protein level).

Its subcellular location is the cytoplasm. The protein resides in the cell cortex. It is found in the cleavage furrow. In terms of biological role, may act as a modulator of septin function during cytokinesis in the developing nervous system. The chain is Hillarin from Drosophila melanogaster (Fruit fly).